Consider the following 451-residue polypeptide: Tubulin gamma-2 chain (451 aa).

Ser-131 bears the Phosphoserine; by BRSK1 mark. GTP is bound at residue 142 to 148 (AGGTGSG).

This sequence belongs to the tubulin family. As to quaternary structure, component of the gamma-tubulin ring complex (gTuRC) consisting of TUBGCP2, TUBGCP3, TUBGCP4, TUBGCP5 and TUBGCP6 and gamma-tubulin TUBG1 or TUBG2. TUBGCP2, TUBGCP3, TUBGCP4, TUBGCP5 and TUBGCP6 assemble in a 5:5:2:1:1 stoichiometry; each is associated with a gamma-tubulin, thereby arranging 14 gamma-tubulins in a helical manner. Gamma-tubulin at the first position is blocked by TUBGCP3 at the last position, allowing 13 protafilaments to grow into a microtubule. Interacts with alpha-beta tubulin heterodimers; the interaction allows microtubules to nucleate from the gTuRC. Post-translationally, phosphorylation at Ser-131 by BRSK1 regulates centrosome duplication, possibly by mediating relocation of gamma-tubulin and its associated proteins from the cytoplasm to the centrosome.

The protein localises to the cytoplasm. It localises to the cytoskeleton. Its subcellular location is the microtubule organizing center. It is found in the centrosome. Functionally, tubulin is the major constituent of microtubules, protein filaments consisting of alpha- and beta-tubulin heterodimers. Gamma-tubulin is a key component of the gamma-tubulin ring complex (gTuRC) which mediates microtubule nucleation. The gTuRC regulates the minus-end nucleation of alpha-beta tubulin heterodimers that grow into microtubule protafilaments, a critical step in centrosome duplication and spindle formation. The chain is Tubulin gamma-2 chain (TUBG2) from Bos taurus (Bovine).